Consider the following 374-residue polypeptide: Aminomethyltransferase (374 aa).

This sequence belongs to the GcvT family. As to quaternary structure, the glycine cleavage system is composed of four proteins: P, T, L and H.

It catalyses the reaction N(6)-[(R)-S(8)-aminomethyldihydrolipoyl]-L-lysyl-[protein] + (6S)-5,6,7,8-tetrahydrofolate = N(6)-[(R)-dihydrolipoyl]-L-lysyl-[protein] + (6R)-5,10-methylene-5,6,7,8-tetrahydrofolate + NH4(+). In terms of biological role, the glycine cleavage system catalyzes the degradation of glycine. This chain is Aminomethyltransferase, found in Edwardsiella ictaluri (strain 93-146).